A 141-amino-acid polypeptide reads, in one-letter code: Hemoglobin subunit alpha (141 aa).

In terms of domain architecture, Globin spans 1–141 (VLSPADKTNV…VSTVLTSKYR (141 aa)). Serine 3 carries the post-translational modification Phosphoserine. Lysine 7 carries the N6-succinyllysine modification. The residue at position 8 (threonine 8) is a Phosphothreonine. At lysine 11 the chain carries N6-succinyllysine. Position 16 is an N6-acetyllysine; alternate (lysine 16). Lysine 16 is subject to N6-succinyllysine; alternate. Tyrosine 24 carries the post-translational modification Phosphotyrosine. Lysine 40 is subject to N6-succinyllysine. The residue at position 49 (serine 49) is a Phosphoserine. Histidine 58 lines the O2 pocket. Histidine 87 lines the heme b pocket. At serine 102 the chain carries Phosphoserine. Phosphothreonine is present on threonine 108. Serine 124 bears the Phosphoserine mark. Residues threonine 134 and threonine 137 each carry the phosphothreonine modification. Phosphoserine is present on serine 138.

Belongs to the globin family. In terms of assembly, heterotetramer of two alpha chains and two beta chains. As to expression, red blood cells.

Involved in oxygen transport from the lung to the various peripheral tissues. Functionally, hemopressin acts as an antagonist peptide of the cannabinoid receptor CNR1. Hemopressin-binding efficiently blocks cannabinoid receptor CNR1 and subsequent signaling. The polypeptide is Hemoglobin subunit alpha (HBA) (Phoca vitulina (Harbor seal)).